The sequence spans 131 residues: Ribosome-binding factor A (131 aa).

The protein belongs to the RbfA family. Monomer. Binds 30S ribosomal subunits, but not 50S ribosomal subunits or 70S ribosomes.

It localises to the cytoplasm. In terms of biological role, one of several proteins that assist in the late maturation steps of the functional core of the 30S ribosomal subunit. Associates with free 30S ribosomal subunits (but not with 30S subunits that are part of 70S ribosomes or polysomes). Required for efficient processing of 16S rRNA. May interact with the 5'-terminal helix region of 16S rRNA. This chain is Ribosome-binding factor A, found in Gloeothece citriformis (strain PCC 7424) (Cyanothece sp. (strain PCC 7424)).